The following is a 146-amino-acid chain: NADH-quinone oxidoreductase subunit A (146 aa).

3 consecutive transmembrane segments (helical) span residues 8–28 (FGSV…GYLT), 63–83 (FYVV…LYPW), and 93–113 (FALI…AYAW).

This sequence belongs to the complex I subunit 3 family. NDH-1 is composed of 14 different subunits. Subunits NuoA, H, J, K, L, M, N constitute the membrane sector of the complex.

Its subcellular location is the cell inner membrane. It carries out the reaction a quinone + NADH + 5 H(+)(in) = a quinol + NAD(+) + 4 H(+)(out). In terms of biological role, NDH-1 shuttles electrons from NADH, via FMN and iron-sulfur (Fe-S) centers, to quinones in the respiratory chain. The immediate electron acceptor for the enzyme in this species is believed to be a menaquinone. Couples the redox reaction to proton translocation (for every two electrons transferred, four hydrogen ions are translocated across the cytoplasmic membrane), and thus conserves the redox energy in a proton gradient. This is NADH-quinone oxidoreductase subunit A from Chlorobium chlorochromatii (strain CaD3).